Here is an 83-residue protein sequence, read N- to C-terminus: Small ribosomal subunit protein bS16 (83 aa).

Belongs to the bacterial ribosomal protein bS16 family.

The protein is Small ribosomal subunit protein bS16 of Cupriavidus taiwanensis (strain DSM 17343 / BCRC 17206 / CCUG 44338 / CIP 107171 / LMG 19424 / R1) (Ralstonia taiwanensis (strain LMG 19424)).